The primary structure comprises 248 residues: 1-(5-phosphoribosyl)-5-[(5-phosphoribosylamino)methylideneamino] imidazole-4-carboxamide isomerase (248 aa).

D8 acts as the Proton acceptor in catalysis. The Proton donor role is filled by D131.

It belongs to the HisA/HisF family.

The protein resides in the cytoplasm. The catalysed reaction is 1-(5-phospho-beta-D-ribosyl)-5-[(5-phospho-beta-D-ribosylamino)methylideneamino]imidazole-4-carboxamide = 5-[(5-phospho-1-deoxy-D-ribulos-1-ylimino)methylamino]-1-(5-phospho-beta-D-ribosyl)imidazole-4-carboxamide. Its pathway is amino-acid biosynthesis; L-histidine biosynthesis; L-histidine from 5-phospho-alpha-D-ribose 1-diphosphate: step 4/9. The protein is 1-(5-phosphoribosyl)-5-[(5-phosphoribosylamino)methylideneamino] imidazole-4-carboxamide isomerase of Cupriavidus pinatubonensis (strain JMP 134 / LMG 1197) (Cupriavidus necator (strain JMP 134)).